The primary structure comprises 210 residues: T-cell surface glycoprotein CD8 beta chain (210 aa).

The signal sequence occupies residues 1-21; the sequence is MRPRLWLLLAAQLAVLHGSSV. The 111-residue stretch at 22 to 132 folds into the Ig-like V-type domain; sequence LQQTPAYIKV…ELTFGKGTQL (111 aa). Over 22-170 the chain is Extracellular; it reads LQQTPAYIKV…ETQKGPLCSP (149 aa). A disulfide bridge links Cys41 with Cys116. An N-linked (GlcNAc...) asparagine glycan is attached at Asn102. The chain crosses the membrane as a helical span at residues 171 to 191; that stretch reads ITLGLLVAGVLVLLVSLGVAI. Residues 192–210 are Cytoplasmic-facing; the sequence is HLCCRRRRARLRFMKQFYK.

As to quaternary structure, forms disulfide-linked heterodimers with CD8A at the cell surface. Interacts with CD3D; this interaction couples TCR-CD3 with CD8. Interacts with LCK. Phosphorylated as a consequence of T-cell activation. In terms of processing, palmitoylated at the cytoplasmic tail and thereby targets the heterodimer CD8A/CD8B to lipid rafts unlike CD8A homodimers.

Its subcellular location is the cell membrane. In terms of biological role, integral membrane glycoprotein that plays an essential role in the immune response and serves multiple functions in responses against both external and internal offenses. In T-cells, functions primarily as a coreceptor for MHC class I molecule:peptide complex. The antigens presented by class I peptides are derived from cytosolic proteins while class II derived from extracellular proteins. Interacts simultaneously with the T-cell receptor (TCR) and the MHC class I proteins presented by antigen presenting cells (APCs). In turn, recruits the Src kinase LCK to the vicinity of the TCR-CD3 complex. A palmitoylation site in the cytoplasmic tail of CD8B chain contributes to partitioning of CD8 into the plasma membrane lipid rafts where signaling proteins are enriched. Once LCK recruited, it initiates different intracellular signaling pathways by phosphorylating various substrates ultimately leading to lymphokine production, motility, adhesion and activation of cytotoxic T-lymphocytes (CTLs). Additionally, plays a critical role in thymic selection of CD8+ T-cells. The chain is T-cell surface glycoprotein CD8 beta chain (CD8B) from Pongo pygmaeus (Bornean orangutan).